Here is a 120-residue protein sequence, read N- to C-terminus: Transcription elongation factor 1 homolog (120 aa).

Zn(2+) contacts are provided by C25, C28, C49, and C52. A compositionally biased stretch (acidic residues) spans E84–D110. Positions E84 to F120 are disordered.

The protein belongs to the ELOF1 family.

The protein localises to the nucleus. In terms of biological role, transcription elongation factor implicated in the maintenance of proper chromatin structure in actively transcribed regions. The protein is Transcription elongation factor 1 homolog of Arabidopsis thaliana (Mouse-ear cress).